The chain runs to 242 residues: Ribonuclease PH (242 aa).

Phosphate contacts are provided by residues arginine 87 and serine 125–arginine 127.

Belongs to the RNase PH family. In terms of assembly, homohexameric ring arranged as a trimer of dimers.

It catalyses the reaction tRNA(n+1) + phosphate = tRNA(n) + a ribonucleoside 5'-diphosphate. In terms of biological role, phosphorolytic 3'-5' exoribonuclease that plays an important role in tRNA 3'-end maturation. Removes nucleotide residues following the 3'-CCA terminus of tRNAs; can also add nucleotides to the ends of RNA molecules by using nucleoside diphosphates as substrates, but this may not be physiologically important. Probably plays a role in initiation of 16S rRNA degradation (leading to ribosome degradation) during starvation. This is Ribonuclease PH from Synechococcus sp. (strain JA-3-3Ab) (Cyanobacteria bacterium Yellowstone A-Prime).